Reading from the N-terminus, the 635-residue chain is Early transcription factor 70 kDa subunit (635 aa).

Positions 32–185 (RSIIDENKSV…SNIISLMSDE (154 aa)) constitute a Helicase ATP-binding domain. 45–52 (HIMGSGKT) is a binding site for ATP. A DEXH box motif is present at residues 135–138 (DEAH). Residues 326 to 505 (KFKYFIGKIT…TLPFDIKKLL (180 aa)) enclose the Helicase C-terminal domain.

It belongs to the helicase family. VETF subfamily. As to quaternary structure, heterodimer of a 70 kDa and a 82 kDa subunit.

The protein resides in the virion. Its function is as follows. Acts with RNA polymerase to initiate transcription from early gene promoters. A DNA-dependent ATPase activity is associated with VETF. This is Early transcription factor 70 kDa subunit (VETFS) from Erythrocebus patas (Red guenon).